The following is a 435-amino-acid chain: 3-phosphoshikimate 1-carboxyvinyltransferase (435 aa).

3-phosphoshikimate is bound by residues Lys23, Ser24, and Arg28. Residue Lys23 participates in phosphoenolpyruvate binding. Phosphoenolpyruvate-binding residues include Gly97 and Arg125. 3-phosphoshikimate is bound by residues Ser170, Ser171, Gln172, Ser198, Asp315, Asn338, and Lys342. Gln172 is a phosphoenolpyruvate binding site. The active-site Proton acceptor is Asp315. The phosphoenolpyruvate site is built by Arg346, Arg388, and Lys413.

The protein belongs to the EPSP synthase family. In terms of assembly, monomer.

Its subcellular location is the cytoplasm. It carries out the reaction 3-phosphoshikimate + phosphoenolpyruvate = 5-O-(1-carboxyvinyl)-3-phosphoshikimate + phosphate. Its pathway is metabolic intermediate biosynthesis; chorismate biosynthesis; chorismate from D-erythrose 4-phosphate and phosphoenolpyruvate: step 6/7. In terms of biological role, catalyzes the transfer of the enolpyruvyl moiety of phosphoenolpyruvate (PEP) to the 5-hydroxyl of shikimate-3-phosphate (S3P) to produce enolpyruvyl shikimate-3-phosphate and inorganic phosphate. The protein is 3-phosphoshikimate 1-carboxyvinyltransferase of Buchnera aphidicola subsp. Cinara cedri (strain Cc).